The primary structure comprises 421 residues: Type II methyltransferase M.TaqI (421 aa).

Positions 1–18 (MGLPPLLSLPSNSAPRSL) are enriched in low complexity. The segment at 1–20 (MGLPPLLSLPSNSAPRSLGR) is disordered. Residues T23, 45–48 (EPAC), E71, D89, and P107 each bind S-adenosyl-L-methionine.

This sequence belongs to the N(4)/N(6)-methyltransferase family.

The enzyme catalyses a 2'-deoxyadenosine in DNA + S-adenosyl-L-methionine = an N(6)-methyl-2'-deoxyadenosine in DNA + S-adenosyl-L-homocysteine + H(+). In terms of biological role, a gamma subtype methylase that recognizes the double-stranded sequence 5'-TCGA-3', methylates A-4 on both strands and protects the DNA from cleavage by the TaqI endonuclease. The sequence is that of Type II methyltransferase M.TaqI (taqIM) from Thermus aquaticus.